Here is a 33-residue protein sequence, read N- to C-terminus: Photosystem II reaction center protein Psb30 (33 aa).

A helical membrane pass occupies residues 7–27 (IQLGSLTLITLTGPLIIGIIF).

This sequence belongs to the Psb30/Ycf12 family. PSII is composed of 1 copy each of membrane proteins PsbA, PsbB, PsbC, PsbD, PsbE, PsbF, PsbH, PsbI, PsbJ, PsbK, PsbL, PsbM, PsbT, PsbY, PsbZ, Psb30/Ycf12, peripheral proteins of the oxygen-evolving complex and a large number of cofactors. It forms dimeric complexes.

Its subcellular location is the plastid. The protein resides in the chloroplast thylakoid membrane. Functionally, a core subunit of photosystem II (PSII), probably helps stabilize the reaction center. The protein is Photosystem II reaction center protein Psb30 of Euglena gracilis.